A 200-amino-acid chain; its full sequence is NADH-quinone oxidoreductase subunit C (200 aa).

The protein belongs to the complex I 30 kDa subunit family. As to quaternary structure, NDH-1 is composed of 14 different subunits. Subunits NuoB, C, D, E, F, and G constitute the peripheral sector of the complex.

The protein resides in the cell inner membrane. The enzyme catalyses a quinone + NADH + 5 H(+)(in) = a quinol + NAD(+) + 4 H(+)(out). Functionally, NDH-1 shuttles electrons from NADH, via FMN and iron-sulfur (Fe-S) centers, to quinones in the respiratory chain. The immediate electron acceptor for the enzyme in this species is believed to be ubiquinone. Couples the redox reaction to proton translocation (for every two electrons transferred, four hydrogen ions are translocated across the cytoplasmic membrane), and thus conserves the redox energy in a proton gradient. This is NADH-quinone oxidoreductase subunit C from Agrobacterium fabrum (strain C58 / ATCC 33970) (Agrobacterium tumefaciens (strain C58)).